A 162-amino-acid chain; its full sequence is Transcription elongation factor GreA (162 aa).

Residues 48–76 are a coiled coil; sequence NSEYQSAKDEQAFVEGRVKQLQQMIQFAQ. The disordered stretch occupies residues 111-132; the sequence is GSAESDPLSGKISNDSPMGKAL.

This sequence belongs to the GreA/GreB family.

In terms of biological role, necessary for efficient RNA polymerase transcription elongation past template-encoded arresting sites. The arresting sites in DNA have the property of trapping a certain fraction of elongating RNA polymerases that pass through, resulting in locked ternary complexes. Cleavage of the nascent transcript by cleavage factors such as GreA or GreB allows the resumption of elongation from the new 3'terminus. GreA releases sequences of 2 to 3 nucleotides. The polypeptide is Transcription elongation factor GreA (Oenococcus oeni (strain ATCC BAA-331 / PSU-1)).